Consider the following 216-residue polypeptide: Peroxiredoxin (216 aa).

The region spanning 2–158 is the Thioredoxin domain; the sequence is IVIGEKFPEV…ILRLVKALKI (157 aa). Cysteine 46 (cysteine sulfenic acid (-SOH) intermediate) is an active-site residue. Arginine 121 contributes to the substrate binding site. Cysteine 205 and cysteine 211 are joined by a disulfide.

It belongs to the peroxiredoxin family. Prx6 subfamily. Homodecamer. Pentamer of dimers that assemble into a ring structure.

The protein resides in the cytoplasm. The catalysed reaction is a hydroperoxide + [thioredoxin]-dithiol = an alcohol + [thioredoxin]-disulfide + H2O. In terms of biological role, thiol-specific peroxidase that catalyzes the reduction of hydrogen peroxide and organic hydroperoxides to water and alcohols, respectively. Plays a role in cell protection against oxidative stress by detoxifying peroxides. The chain is Peroxiredoxin from Pyrococcus furiosus (strain ATCC 43587 / DSM 3638 / JCM 8422 / Vc1).